We begin with the raw amino-acid sequence, 409 residues long: Na(+)/H(+) antiporter NhaA 2 (409 aa).

12 consecutive transmembrane segments (helical) span residues 10–30 (VAAGLLLLAAVVGLVVANTPA), 60–80 (GLLVVFFFIVAVELKHEFLAG), 89–109 (LVPAIAAVGGVVVPALVYLAI), 118–138 (GWPVPTATDIAFALGVLAVFG), 148–168 (FLLALAVLDDLIAIGIIAVFF), 171–191 (GLDLGALAIAVAGVVLFAVVG), 203–223 (IAVVALLVLVALVTWWATLSS), 224–244 (GIHATIAGVALGFALPRLSGL), 257–277 (IVLPLFAFSAALVAIPAIGLA), 283–303 (FWGIALALPLGKLVGITAGGL), 328–348 (LLGGIGFTVSLLMSELAFAGL), and 356–376 (TLAVLLGSGVAIVAAAVTLSI). Residues 384–409 (AGAAADDDDATRDDFPAHADGGPARA) are disordered.

The protein belongs to the NhaA Na(+)/H(+) (TC 2.A.33) antiporter family.

The protein localises to the cell membrane. It catalyses the reaction Na(+)(in) + 2 H(+)(out) = Na(+)(out) + 2 H(+)(in). Na(+)/H(+) antiporter that extrudes sodium in exchange for external protons. The protein is Na(+)/H(+) antiporter NhaA 2 of Clavibacter michiganensis subsp. michiganensis (strain NCPPB 382).